Reading from the N-terminus, the 225-residue chain is UPF0758 protein NGK_1225 (225 aa).

The MPN domain occupies 102-224 (TLSDPDTVAD…VRSFRQLGLM (123 aa)). The Zn(2+) site is built by histidine 173, histidine 175, and aspartate 186. Positions 173–186 (HNHPGGSPEPSQED) match the JAMM motif motif.

The protein belongs to the UPF0758 family.

This Neisseria gonorrhoeae (strain NCCP11945) protein is UPF0758 protein NGK_1225.